Here is a 469-residue protein sequence, read N- to C-terminus: MGSKSVVDMIEAASRAHFSGLHVNGHMNGLEPSALKETTSASEDIQRQPFVIGVAGGAASGKTTVCDMIIQQLHDQRVVLINLDSFYHNLTEEELARVHEYNFDHPDAFDTEHLLSCMEKLRQGQAVDIPKYDFKTYRSSVFRRVNPTDVIILEGILLFHDPRVRKLMNMKIFVCTDADVRLARRIKRDTVENGRDIGTVLDQYSKFVKPAFDDFILPTKKYADIIIPRGGDNHVAIDLIVQHICTKLGQHDLCKIYPNLYVIHSTFQIRGMHTLIRDSQTTKHDFVFYSDRLIRLVVEHGLGHLPFTEKQVITPTGCVYSGVDFCKRLCGVSVIRSGESMENALRACCKGIKIGKILIHREGDNGQQLVYEKLPNDISERHVLLLDPILGTGNSAVEAINLLISKGVPEGNIIFLNLISAPQGVHVVCKKFPRIKIVTSEIDNGLNEEFRVIPGMGEFGDRYFGTDDD.

The segment at 46–249 is uridine kinase; the sequence is QRQPFVIGVA…IVQHICTKLG (204 aa). The interval 259 to 469 is uracil phosphoribosyltransferase; the sequence is NLYVIHSTFQ…GDRYFGTDDD (211 aa). Residues Lys-283, Arg-292, and 326–329 contribute to the GTP site; that span reads CKRL. 2 residues coordinate 5-phospho-alpha-D-ribose 1-diphosphate: Arg-336 and Arg-361. Arg-381 provides a ligand contact to GTP. Residues Asp-387, 392-395, and Glu-458 each bind 5-phospho-alpha-D-ribose 1-diphosphate; that span reads TGNS. 457–459 contacts uracil; sequence GEF.

It in the N-terminal section; belongs to the uridine kinase family. The protein in the C-terminal section; belongs to the UPRTase family. The cofactor is Mg(2+).

It catalyses the reaction UMP + diphosphate = 5-phospho-alpha-D-ribose 1-diphosphate + uracil. The enzyme catalyses cytidine + ATP = CMP + ADP + H(+). The catalysed reaction is uridine + ATP = UMP + ADP + H(+). Its pathway is pyrimidine metabolism; UMP biosynthesis via salvage pathway; UMP from uracil: step 1/1. It participates in pyrimidine metabolism; CTP biosynthesis via salvage pathway; CTP from cytidine: step 1/3. It functions in the pathway pyrimidine metabolism; UMP biosynthesis via salvage pathway; UMP from uridine: step 1/1. With respect to regulation, allosterically activated by GTP. Involved in the pyrimidine salvage pathway. The uracil phosphoribosyltransferase (UPRT) activity, that catalyzes the conversion of uracil and 5-phospho-alpha-D-ribose 1-diphosphate (PRPP) to UMP and diphosphate, is unsure. This chain is Uridine kinase-like protein 4 (UKL4), found in Arabidopsis thaliana (Mouse-ear cress).